A 247-amino-acid chain; its full sequence is Carboxy-S-adenosyl-L-methionine synthase (247 aa).

Residues Tyr39, 64 to 66, 89 to 90, 117 to 118, Asn132, and Arg199 each bind S-adenosyl-L-methionine; these read GCS, DN, and DI.

It belongs to the class I-like SAM-binding methyltransferase superfamily. Cx-SAM synthase family. Homodimer.

It carries out the reaction prephenate + S-adenosyl-L-methionine = carboxy-S-adenosyl-L-methionine + 3-phenylpyruvate + H2O. In terms of biological role, catalyzes the conversion of S-adenosyl-L-methionine (SAM) to carboxy-S-adenosyl-L-methionine (Cx-SAM). The chain is Carboxy-S-adenosyl-L-methionine synthase from Salmonella agona (strain SL483).